Consider the following 952-residue polypeptide: Probable RNA-binding protein 19 (952 aa).

An RRM 1 domain is found at 2 to 79 (SRLIVKNLPN…TRITVEFCKS (78 aa)). Disordered regions lie at residues 85-126 (KPRA…LEKL), 159-267 (KAKT…RGAV), and 367-395 (KQAPTARGPPKSTTPWQGRTLGENEEEED). Over residues 95 to 109 (KSSQPKQPSQDSVPS) the composition is skewed to low complexity. Residues 163–180 (KASSDYLNFDSDSNSDSG) are compositionally biased toward polar residues. 3 positions are modified to phosphoserine: S177, S179, and S183. Composition is skewed to acidic residues over residues 181-196 (QESEEEPAREDPEEEQ) and 224-251 (SSEDEDEEDSEDEAVNCEEGSEEEEEEG). 2 consecutive RRM domains span residues 293 to 368 (YTVK…REKQ) and 400 to 478 (GRLF…PSTI). K479 participates in a covalent cross-link: Glycyl lysine isopeptide (Lys-Gly) (interchain with G-Cter in SUMO2). Residues 481–504 (EASQEANAPGSSYKKKKEAMDKAN) are disordered. The RRM 4 domain occupies 584–656 (TVILAKNLPA…VPLYLEWAPI (73 aa)). The segment covering 664 to 679 (QKKDSQHEQPAEKAEV) has biased composition (basic and acidic residues). The tract at residues 664-719 (QKKDSQHEQPAEKAEVEQETVLDPEGEKASVEGAEASTGKMEEEEEEEEEEEEESI) is disordered. The residue at position 693 (S693) is a Phosphoserine. Acidic residues predominate over residues 705-718 (EEEEEEEEEEEEES). RRM domains follow at residues 722–803 (CTLF…ISER) and 824–904 (SKIL…WADS). 2 positions are modified to phosphoserine: S928 and S944.

Belongs to the RRM MRD1 family. In terms of tissue distribution, expressed in the crypts of Lieberkuhn of the intestine (at protein level).

The protein localises to the nucleus. The protein resides in the nucleolus. It localises to the nucleoplasm. Its subcellular location is the cytoplasm. It is found in the chromosome. In terms of biological role, plays a role in embryo pre-implantation development. The chain is Probable RNA-binding protein 19 (Rbm19) from Mus musculus (Mouse).